We begin with the raw amino-acid sequence, 269 residues long: Glucosyl-3-phosphoglycerate/mannosyl-3-phosphoglycerate phosphatase (269 aa).

D6 functions as the Nucleophile in the catalytic mechanism. The Mg(2+) site is built by D6, D8, and D210.

Belongs to the HAD-like hydrolase superfamily. MPGP family. In terms of assembly, monomer. Co(2+) is required as a cofactor. The cofactor is Mg(2+).

The enzyme catalyses (2R)-2-O-(alpha-D-glucopyranosyl)-3-phospho-glycerate + H2O = (2R)-2-O-(alpha-D-glucopyranosyl)-glycerate + phosphate. It catalyses the reaction 2-O-(alpha-D-mannosyl)-3-phosphoglycerate + H2O = (2R)-2-O-(alpha-D-mannosyl)-glycerate + phosphate. Its function is as follows. Involved in the biosynthesis of glucosylglycerate. Catalyzes the dephosphorylation of glucosyl-3-phosphoglycerate (GPG) and mannosyl-3-phosphoglycerate (MPG) to glucosylglycerate (GG) and mannosylglycerate (MG), respectively. In Persephonella marina (strain DSM 14350 / EX-H1), this protein is Glucosyl-3-phosphoglycerate/mannosyl-3-phosphoglycerate phosphatase.